A 146-amino-acid chain; its full sequence is NADPH-dependent 7-cyano-7-deazaguanine reductase (146 aa).

Cys-48 (thioimide intermediate) is an active-site residue. The Proton donor role is filled by Asp-55. Substrate-binding positions include 70–72 and 89–90; these read VES and HE.

The protein belongs to the GTP cyclohydrolase I family. QueF type 1 subfamily.

Its subcellular location is the cytoplasm. The enzyme catalyses 7-aminomethyl-7-carbaguanine + 2 NADP(+) = 7-cyano-7-deazaguanine + 2 NADPH + 3 H(+). Its pathway is tRNA modification; tRNA-queuosine biosynthesis. Its function is as follows. Catalyzes the NADPH-dependent reduction of 7-cyano-7-deazaguanine (preQ0) to 7-aminomethyl-7-deazaguanine (preQ1). The polypeptide is NADPH-dependent 7-cyano-7-deazaguanine reductase (Helicobacter pylori (strain Shi470)).